A 161-amino-acid chain; its full sequence is uncharacterized protein (161 aa).

A signal peptide spans 1 to 27 (MKKIGLLFMLCLAALFTIGFPAQQADA).

The protein localises to the secreted. This is an uncharacterized protein from Bacillus subtilis (strain 168).